A 249-amino-acid chain; its full sequence is Probable transcriptional regulatory protein aq_1575 (249 aa).

Belongs to the TACO1 family.

It localises to the cytoplasm. In Aquifex aeolicus (strain VF5), this protein is Probable transcriptional regulatory protein aq_1575.